A 1140-amino-acid chain; its full sequence is MSSYIERIEAHNFKSFRRKKVINFTKGLNVISGPNGSGKSNIGDMLLFVLGTKSIHAVRADRLSDLVSKGSGNECSVSVTFRSDDGRSLVIERRLVIEDEPKSYYYVNGVRSRLSEIDETLASMGINFGTYSFVLQGDINDFISYSGQERRKLIERISGVDQFDSEIERVKADIEAVSRNMEINQTIIDEKRQNLERLRTEKEKKERYDALLKRKRDVEYTEILNRKNAMERQKRTIEGQISDLTKEIAQLEERRSDLEKRSEAIRIRREDVAKRIDDLTSGEMNRVKTDLHSVEVDIAKIRGIIDEKNRNMEKLEETIAKYESERDSTDREIEDLDRQIEEKAKRKRALEDRYADLKKRYDDLFSRAQAEAVDAAETRRKSKEYQEKIDGLGREIEELKAAGSQMNADLAVLLQKKAALEERKEDLDLKIRTSEWKAKETSEDMGKYSRKYYDLKAKYDQINDRISDLKSEISEKEASAKIASSRVPEYVRNVKMLEESVEGVIGLVRDLISYGEKYVKAVESAGGGRLNAVVVKDDAVAKECIQILKDRKISPMTFLPLNKMRDPPAQRDVGKISKDPGYLGILMDFVDFEDQYRSAVYYAIRDTILVQDIDAGRRLMGIFRLVTLDGDIFDPGGSITGGYRNYASDYASALRMQHDLEGMKIQLSSLMDDRSRIKREMDQAFSEMSEASRRTGEIMKEQEMLKKEAERSREELKQVMDDISSTDRAIADKKRMIDENEKVIEQKTLDLHKYQEALNDLYDRIDPEFFKNIGDLSNEINEVRSEIDAVASELNQITSRRDILSSERKHLEDQMIDTKLQENSIAAEIDDLNGKKRELEEKAKKYQYALNDLEGRYGNLSAQVREADKQIREMENGINDAKASIDLKNDLMNDLKVKAGILEGNLSSIERELSSYSGCEAVIGDLQAMRQEIERAIMDLGEINNAAPQQYEDALKDLDDYEKKHEKLMEEKKALEETTAMLNEKKREVFVKTFTDISEKMNYVYGIINGGTAKLIMIGSDPLTSSVEVSVTPKDKATVKIQALSGGEKSVAALSFITAVQILMPSSIYFLDEVDMYLDAYNAENMIKMISQNAGEAQTIVISLKSLVFSYASNAIGVTSVNGESFVFNGHFDGSPEAAP.

34 to 41 (PNGSGKSN) contributes to the ATP binding site. A coiled-coil region spans residues 160–484 (VDQFDSEIER…EKEASAKIAS (325 aa)). One can recognise an SMC hinge domain in the interval 502–619 (EGVIGLVRDL…VQDIDAGRRL (118 aa)). A coiled-coil region spans residues 660–990 (LEGMKIQLSS…MLNEKKREVF (331 aa)).

It belongs to the SMC family. Homodimer.

It localises to the cytoplasm. Its function is as follows. Required for chromosome condensation and partitioning. The sequence is that of Chromosome partition protein Smc from Thermoplasma acidophilum (strain ATCC 25905 / DSM 1728 / JCM 9062 / NBRC 15155 / AMRC-C165).